The chain runs to 972 residues: Macrophage colony-stimulating factor 1 receptor (972 aa).

The first 19 residues, methionine 1 to glycine 19, serve as a signal peptide directing secretion. The Extracellular segment spans residues isoleucine 20–proline 517. Ig-like C2-type domains follow at residues proline 21 to proline 104, proline 107 to lysine 197, proline 203 to serine 290, alanine 299 to arginine 399, and proline 402 to serine 502. Intrachain disulfides connect cysteine 42–cysteine 84, cysteine 127–cysteine 177, and cysteine 224–cysteine 278. N-linked (GlcNAc...) asparagine glycosylation is found at asparagine 45, asparagine 73, asparagine 153, asparagine 240, asparagine 275, asparagine 302, asparagine 335, asparagine 353, asparagine 412, asparagine 428, and asparagine 480. Residues cysteine 419 and cysteine 485 are joined by a disulfide bond. Residues valine 518–tyrosine 538 traverse the membrane as a helical segment. Residues lysine 539 to cysteine 972 are Cytoplasmic-facing. A regulatory juxtamembrane domain region spans residues glutamine 542–lysine 574. 2 positions are modified to phosphotyrosine; by autocatalysis: tyrosine 546 and tyrosine 561. One can recognise a Protein kinase domain in the interval leucine 582–leucine 910. Residues leucine 588–valine 596 and lysine 616 contribute to the ATP site. Tyrosine 699 and tyrosine 708 each carry phosphotyrosine; by autocatalysis. A Phosphoserine modification is found at serine 713. Phosphotyrosine; by autocatalysis is present on tyrosine 723. The Proton acceptor role is filled by aspartate 778. The segment at aspartate 796–proline 818 is activation loop. Phosphotyrosine; by autocatalysis occurs at positions 809 and 923. The disordered stretch occupies residues arginine 918–histidine 950. Positions serine 928 to serine 940 are enriched in low complexity. Position 969 is a phosphotyrosine; by autocatalysis (tyrosine 969).

Belongs to the protein kinase superfamily. Tyr protein kinase family. CSF-1/PDGF receptor subfamily. As to quaternary structure, interacts with INPPL1/SHIP2 and THOC5. Monomer. Homodimer. Interacts with CSF1 and IL34. Interaction with dimeric CSF1 or IL34 leads to receptor homodimerization. Interacts (tyrosine phosphorylated) with PLCG2 (via SH2 domain). Interacts (tyrosine phosphorylated) with PIK3R1 (via SH2 domain). Interacts (tyrosine phosphorylated) with FYN, YES1 and SRC (via SH2 domain). Interacts (tyrosine phosphorylated) with CBL, GRB2 and SLA2. In terms of processing, autophosphorylated in response to CSF1 or IL34 binding. Phosphorylation at Tyr-561 is important for normal down-regulation of signaling by ubiquitination, internalization and degradation. Phosphorylation at Tyr-561 and Tyr-809 is important for interaction with SRC family members, including FYN, YES1 and SRC, and for subsequent activation of these protein kinases. Phosphorylation at Tyr-699 and Tyr-923 is important for interaction with GRB2. Phosphorylation at Tyr-723 is important for interaction with PIK3R1. Phosphorylation at Tyr-708 is important for normal receptor degradation. Phosphorylation at Tyr-723 and Tyr-809 is important for interaction with PLCG2. Phosphorylation at Tyr-969 is important for interaction with CBL. Dephosphorylation by PTPN2 negatively regulates downstream signaling and macrophage differentiation. Ubiquitinated. Becomes rapidly polyubiquitinated after autophosphorylation, leading to its degradation. In terms of tissue distribution, expressed in bone marrow and in differentiated blood mononuclear cells.

It localises to the cell membrane. It carries out the reaction L-tyrosyl-[protein] + ATP = O-phospho-L-tyrosyl-[protein] + ADP + H(+). With respect to regulation, present in an inactive conformation in the absence of bound ligand. CSF1 or IL34 binding leads to dimerization and activation by autophosphorylation on tyrosine residues. Inhibited by imatinib/STI-571 (Gleevec), dasatinib, sunitinib/SU11248, lestaurtinib/CEP-701, midostaurin/PKC-412, Ki20227, linifanib/ABT-869, Axitinib/AG013736, sorafenib/BAY 43-9006 and GW2580. Its function is as follows. Tyrosine-protein kinase that acts as a cell-surface receptor for CSF1 and IL34 and plays an essential role in the regulation of survival, proliferation and differentiation of hematopoietic precursor cells, especially mononuclear phagocytes, such as macrophages and monocytes. Promotes the release of pro-inflammatory chemokines in response to IL34 and CSF1, and thereby plays an important role in innate immunity and in inflammatory processes. Plays an important role in the regulation of osteoclast proliferation and differentiation, the regulation of bone resorption, and is required for normal bone and tooth development. Required for normal male and female fertility, and for normal development of milk ducts and acinar structures in the mammary gland during pregnancy. Promotes reorganization of the actin cytoskeleton, regulates formation of membrane ruffles, cell adhesion and cell migration, and promotes cancer cell invasion. Activates several signaling pathways in response to ligand binding, including the ERK1/2 and the JNK pathway. Phosphorylates PIK3R1, PLCG2, GRB2, SLA2 and CBL. Activation of PLCG2 leads to the production of the cellular signaling molecules diacylglycerol and inositol 1,4,5-trisphosphate, that then lead to the activation of protein kinase C family members, especially PRKCD. Phosphorylation of PIK3R1, the regulatory subunit of phosphatidylinositol 3-kinase, leads to activation of the AKT1 signaling pathway. Activated CSF1R also mediates activation of the MAP kinases MAPK1/ERK2 and/or MAPK3/ERK1, and of the SRC family kinases SRC, FYN and YES1. Activated CSF1R transmits signals both via proteins that directly interact with phosphorylated tyrosine residues in its intracellular domain, or via adapter proteins, such as GRB2. Promotes activation of STAT family members STAT3, STAT5A and/or STAT5B. Promotes tyrosine phosphorylation of SHC1 and INPP5D/SHIP-1. Receptor signaling is down-regulated by protein phosphatases, such as INPP5D/SHIP-1, that dephosphorylate the receptor and its downstream effectors, and by rapid internalization of the activated receptor. In the central nervous system, may play a role in the development of microglia macrophages. The polypeptide is Macrophage colony-stimulating factor 1 receptor (CSF1R) (Homo sapiens (Human)).